The primary structure comprises 207 residues: Small ribosomal subunit protein uS4 (207 aa).

Positions 33 to 54 (KLDSKPGQHGRTSGARTSDYGN) are disordered. Residues 42 to 53 (GRTSGARTSDYG) are compositionally biased toward polar residues. One can recognise an S4 RNA-binding domain in the interval 97–160 (SRLDNVVYRM…KKQVRIAEAL (64 aa)).

Belongs to the universal ribosomal protein uS4 family. Part of the 30S ribosomal subunit. Contacts protein S5. The interaction surface between S4 and S5 is involved in control of translational fidelity.

In terms of biological role, one of the primary rRNA binding proteins, it binds directly to 16S rRNA where it nucleates assembly of the body of the 30S subunit. With S5 and S12 plays an important role in translational accuracy. The protein is Small ribosomal subunit protein uS4 of Cupriavidus pinatubonensis (strain JMP 134 / LMG 1197) (Cupriavidus necator (strain JMP 134)).